A 312-amino-acid chain; its full sequence is Elongation factor Ts (312 aa).

An involved in Mg(2+) ion dislocation from EF-Tu region spans residues 84-87; the sequence is TDFV.

It belongs to the EF-Ts family.

It is found in the cytoplasm. Its function is as follows. Associates with the EF-Tu.GDP complex and induces the exchange of GDP to GTP. It remains bound to the aminoacyl-tRNA.EF-Tu.GTP complex up to the GTP hydrolysis stage on the ribosome. The protein is Elongation factor Ts of Caulobacter vibrioides (strain ATCC 19089 / CIP 103742 / CB 15) (Caulobacter crescentus).